A 399-amino-acid chain; its full sequence is Glutamyl-tRNA reductase (399 aa).

Substrate-binding positions include 45-48, serine 93, 98-100, and glutamine 104; these read TCNR and EDQ. Cysteine 46 functions as the Nucleophile in the catalytic mechanism. Residue 173–178 participates in NADP(+) binding; it reads GAGKMG.

Belongs to the glutamyl-tRNA reductase family. In terms of assembly, homodimer.

The catalysed reaction is (S)-4-amino-5-oxopentanoate + tRNA(Glu) + NADP(+) = L-glutamyl-tRNA(Glu) + NADPH + H(+). It participates in porphyrin-containing compound metabolism; protoporphyrin-IX biosynthesis; 5-aminolevulinate from L-glutamyl-tRNA(Glu): step 1/2. Catalyzes the NADPH-dependent reduction of glutamyl-tRNA(Glu) to glutamate 1-semialdehyde (GSA). The sequence is that of Glutamyl-tRNA reductase from Methanobrevibacter smithii (strain ATCC 35061 / DSM 861 / OCM 144 / PS).